A 293-amino-acid chain; its full sequence is MTHTPVLLKEMLSLLSPQDGGIYVDATFGAGGYSKAILESADCKVYAIDRDETVTKFYDDLSVRYPDRIKLFIEKFSNIKNLLDSNNIEGIDGIVFDIGVSSMQLDNGDRGFSFLHDGPLDMSMDNSSYINASTFVNALREEEIANTIYNYGGERHSRKIARAIVNARKKKTIKTTFELADIVRSVVFRGKSKIDPATRTFQAIRIWVNDELGELEKGIKAASEILSENGKLIVVTFHSLEDRIVKTFFKDLCATDCKTFSLLNKKVIEASIEEVSANPRSRSAKLRAIQRLS.

S-adenosyl-L-methionine is bound by residues glycine 31–tyrosine 33, aspartate 49, phenylalanine 76, aspartate 97, and glutamine 104.

Belongs to the methyltransferase superfamily. RsmH family.

It is found in the cytoplasm. The enzyme catalyses cytidine(1402) in 16S rRNA + S-adenosyl-L-methionine = N(4)-methylcytidine(1402) in 16S rRNA + S-adenosyl-L-homocysteine + H(+). Specifically methylates the N4 position of cytidine in position 1402 (C1402) of 16S rRNA. This Wolbachia sp. subsp. Drosophila simulans (strain wRi) protein is Ribosomal RNA small subunit methyltransferase H.